Reading from the N-terminus, the 480-residue chain is Krueppel-like factor 10 (480 aa).

Positions 1–12 (MLNFGASLQQAS) are enriched in polar residues. Disordered stretches follow at residues 1–32 (MLNF…PWDK), 64–83 (VTPV…TPDL), and 97–146 (PSDF…APPL). The segment covering 14-32 (GKMELISEKSKEGAHPWDK) has biased composition (basic and acidic residues). Ser183 carries the post-translational modification Phosphoserine. Positions 202–222 (AAVSPNRPKPEPSTAANGAEK) are disordered. Ser249 carries the phosphoserine modification. C2H2-type zinc fingers lie at residues 369-393 (HICS…VRTH), 399-423 (FSCS…RRTH), and 429-451 (FACP…ARRH).

This sequence belongs to the Sp1 C2H2-type zinc-finger protein family. Ubiquitinated; mediated by SIAH1 and leading to its subsequent proteasomal degradation.

The protein resides in the nucleus. Functionally, transcriptional repressor which binds to the consensus sequence 5'-GGTGTG-3'. Regulates the circadian expression of genes involved in lipogenesis, gluconeogenesis, and glycolysis in the liver. Represses the expression of PCK2, a rate-limiting step enzyme of gluconeogenesis. May play a role in the cell cycle regulation. Plays a role in the regulation of the circadian clock; binds to the GC box sequence in the promoter of the core clock component ARTNL/BMAL1 and represses its transcriptional activity. This is Krueppel-like factor 10 (Klf10) from Rattus norvegicus (Rat).